The chain runs to 31 residues: Alcohol dehydrogenase 1 (31 aa).

Cys7 provides a ligand contact to Zn(2+).

The protein belongs to the zinc-containing alcohol dehydrogenase family. Class-P subfamily. In terms of assembly, homodimer. Zn(2+) serves as cofactor.

Its subcellular location is the cytoplasm. It carries out the reaction a primary alcohol + NAD(+) = an aldehyde + NADH + H(+). It catalyses the reaction a secondary alcohol + NAD(+) = a ketone + NADH + H(+). The protein is Alcohol dehydrogenase 1 of Catharanthus roseus (Madagascar periwinkle).